The chain runs to 343 residues: SET and MYND domain-containing protein DDB_G0292454 (343 aa).

Residues 77 to 307 (EPFISYPSII…PGDEITISYT (231 aa)) form the SET domain. Residues C93, C96, C111, C114, C120, C124, H133, and C137 each coordinate Zn(2+). An MYND-type zinc finger spans residues 93–137 (CNHCLKEIKKEEEEIKQECEECKVYKYCSIECKEKSSIEYHSVLC).

This sequence belongs to the class V-like SAM-binding methyltransferase superfamily.

Its function is as follows. Probable methyltransferase. This chain is SET and MYND domain-containing protein DDB_G0292454, found in Dictyostelium discoideum (Social amoeba).